A 491-amino-acid chain; its full sequence is Glutamyl-tRNA(Gln) amidotransferase subunit A (491 aa).

Residues Lys-79 and Ser-154 each act as charge relay system in the active site. Ser-178 (acyl-ester intermediate) is an active-site residue.

Belongs to the amidase family. GatA subfamily. In terms of assembly, heterotrimer of A, B and C subunits.

The enzyme catalyses L-glutamyl-tRNA(Gln) + L-glutamine + ATP + H2O = L-glutaminyl-tRNA(Gln) + L-glutamate + ADP + phosphate + H(+). In terms of biological role, allows the formation of correctly charged Gln-tRNA(Gln) through the transamidation of misacylated Glu-tRNA(Gln) in organisms which lack glutaminyl-tRNA synthetase. The reaction takes place in the presence of glutamine and ATP through an activated gamma-phospho-Glu-tRNA(Gln). The polypeptide is Glutamyl-tRNA(Gln) amidotransferase subunit A (Natranaerobius thermophilus (strain ATCC BAA-1301 / DSM 18059 / JW/NM-WN-LF)).